We begin with the raw amino-acid sequence, 562 residues long: Membrane protein insertase YidC (562 aa).

A helical membrane pass occupies residues 4–24 (QRIFLFLALSILGLLLWTSWE). The tract at residues 33–71 (TEEVVEAEDDVPAPAETPDEAPDPADGETPARDRAEVED) is disordered. Over residues 35-58 (EVVEAEDDVPAPAETPDEAPDPAD) the composition is skewed to acidic residues. Positions 61–71 (TPARDRAEVED) are enriched in basic and acidic residues. 4 helical membrane-spanning segments follow: residues 330-350 (MTLSVDYGFLTVLAKPLFWLL), 356-376 (IVGNWGVAIILVTLLIKLAFY), 426-446 (LGGCLPILVQIPVFIALYWVL), and 499-519 (IMMALPIVFTGFFMLFPAGLV).

This sequence belongs to the OXA1/ALB3/YidC family. Type 1 subfamily. As to quaternary structure, interacts with the Sec translocase complex via SecD. Specifically interacts with transmembrane segments of nascent integral membrane proteins during membrane integration.

It is found in the cell inner membrane. Its function is as follows. Required for the insertion and/or proper folding and/or complex formation of integral membrane proteins into the membrane. Involved in integration of membrane proteins that insert both dependently and independently of the Sec translocase complex, as well as at least some lipoproteins. Aids folding of multispanning membrane proteins. In Alkalilimnicola ehrlichii (strain ATCC BAA-1101 / DSM 17681 / MLHE-1), this protein is Membrane protein insertase YidC.